Consider the following 711-residue polypeptide: Choline transporter-like protein 2 (711 aa).

The Cytoplasmic segment spans residues Met1 to Asp33. Thr14 bears the Phosphothreonine mark. Residues Val34–Ala54 form a helical membrane-spanning segment. The Extracellular segment spans residues Trp55 to Trp232. Asn187 and Asn200 each carry an N-linked (GlcNAc...) asparagine glycan. Residues Tyr233–Leu253 form a helical membrane-spanning segment. Residues Arg254–Leu256 lie on the Cytoplasmic side of the membrane. A helical membrane pass occupies residues Ala257–Phe277. The Extracellular portion of the chain corresponds to His278–Trp315. The helical transmembrane segment at Leu316–Leu336 threads the bilayer. Residues Arg337–Pro364 lie on the Cytoplasmic side of the membrane. Residues Leu365 to Leu385 form a helical membrane-spanning segment. Residues Ser386–Arg440 are Extracellular-facing. N-linked (GlcNAc...) asparagine glycosylation is present at Asn417. The helical transmembrane segment at Ala441–Leu461 threads the bilayer. Over Ala462–Ser504 the chain is Cytoplasmic. The chain crosses the membrane as a helical span at residues Leu505–Leu525. The Extracellular portion of the chain corresponds to Asp526–Tyr563. Residues Ile564 to Leu584 traverse the membrane as a helical segment. Residues Met585–Asp599 lie on the Cytoplasmic side of the membrane. Residues Phe600 to Phe620 traverse the membrane as a helical segment. The Extracellular segment spans residues Phe621–Tyr638. Residues Trp639–Val659 traverse the membrane as a helical segment. At Tyr660–Glu711 the chain is on the cytoplasmic side.

This sequence belongs to the CTL (choline transporter-like) family. As to quaternary structure, interacts with COCH. N-glycosylated.

Its subcellular location is the cell membrane. It is found in the mitochondrion outer membrane. It carries out the reaction choline(out) + n H(+)(in) = choline(in) + n H(+)(out). The enzyme catalyses ethanolamine(out) + n H(+)(in) = ethanolamine(in) + n H(+)(out). Its function is as follows. Choline/H+ antiporter, mainly in mitochodria. Also acts as a low-affinity ethanolamine/H+ antiporter, regulating the supply of extracellular ethanolamine (Etn) for the CDP-Etn pathway, redistribute intracellular Etn and balance the CDP-Cho and CDP-Etn arms of the Kennedy pathway. The polypeptide is Choline transporter-like protein 2 (SLC44A2) (Pongo abelii (Sumatran orangutan)).